Reading from the N-terminus, the 195-residue chain is Imidazoleglycerol-phosphate dehydratase (195 aa).

The protein belongs to the imidazoleglycerol-phosphate dehydratase family.

It is found in the cytoplasm. It carries out the reaction D-erythro-1-(imidazol-4-yl)glycerol 3-phosphate = 3-(imidazol-4-yl)-2-oxopropyl phosphate + H2O. It functions in the pathway amino-acid biosynthesis; L-histidine biosynthesis; L-histidine from 5-phospho-alpha-D-ribose 1-diphosphate: step 6/9. This is Imidazoleglycerol-phosphate dehydratase from Geobacter sp. (strain M21).